The sequence spans 316 residues: Replication initiation protein (316 aa).

This sequence belongs to the initiator RepB protein family.

In Escherichia coli, this protein is Replication initiation protein (repA).